Here is a 503-residue protein sequence, read N- to C-terminus: Lysine--tRNA ligase (503 aa).

Mg(2+) contacts are provided by E412 and E419.

It belongs to the class-II aminoacyl-tRNA synthetase family. Homodimer. Requires Mg(2+) as cofactor.

The protein localises to the cytoplasm. It catalyses the reaction tRNA(Lys) + L-lysine + ATP = L-lysyl-tRNA(Lys) + AMP + diphosphate. This Buchnera aphidicola subsp. Schizaphis graminum (strain Sg) protein is Lysine--tRNA ligase.